Reading from the N-terminus, the 174-residue chain is UPF0398 protein LACR_0544 (174 aa).

Belongs to the UPF0398 family.

This is UPF0398 protein LACR_0544 from Lactococcus lactis subsp. cremoris (strain SK11).